Consider the following 451-residue polypeptide: Putative metabolite transport protein YyaJ (451 aa).

The Cytoplasmic portion of the chain corresponds to 1–29 (MNTIFKQKNTHPFSNAANRLDRLPISRVH). Residues 30–50 (FQVLTALGIVYFFDLADLFTL) traverse the membrane as a helical segment. Residues 51–60 (SNVAPALIEH) are Extracellular-facing. The helical transmembrane segment at 61–81 (WGIPLSTIANVTAASFLGMFL) threads the bilayer. At 82 to 97 (GASLGGRLSDRIGRKK) the chain is on the cytoplasmic side. A helical membrane pass occupies residues 98–118 (ALNLFVFVFSIASLCNAAAWD). Residues 119–124 (IPSLMT) are Extracellular-facing. The chain crosses the membrane as a helical span at residues 125-145 (FRFLTGFGVAAAMVITNSYLA). Residues 146 to 157 (EFFPSSVRGKYI) are Cytoplasmic-facing. A helical transmembrane segment spans residues 158–178 (SFCAMIGLIGVPITNIVSAFV). Residues 179–182 (IPLG) are Extracellular-facing. Residues 183 to 203 (SWGWRLVFVWGAVGLIYFFFI) traverse the membrane as a helical segment. At 204 to 270 (HRLEESPRWH…LLKGRNLKIT (67 aa)) the chain is on the cytoplasmic side. A helical transmembrane segment spans residues 271 to 291 (IVLSAVWIFETFGFYGFASWV). At 292 to 305 (PSLLKSNGVTMENT) the chain is on the extracellular side. A helical transmembrane segment spans residues 306–326 (LWYNVLHSVGAPLGALLGSMI). At 327–333 (SERFQRK) the chain is on the cytoplasmic side. A helical transmembrane segment spans residues 334–354 (WILAASAFLTAIAGLLYGMTF). Residues 355–357 (IPI) lie on the Extracellular side of the membrane. Residues 358 to 378 (MIIVFGFIVNITERVFTSNLY) form a helical membrane-spanning segment. The Cytoplasmic portion of the chain corresponds to 379 to 396 (AYTSEPYPTEYRSSGSGL). The helical transmembrane segment at 397-417 (AYGLGRFSNIFGSLLVGFIAV) threads the bilayer. The Extracellular portion of the chain corresponds to 418–421 (QLGY). Residues 422–442 (ISVFLFIGGCWLACSLLLIFF) form a helical membrane-spanning segment. Residues 443-451 (GPNTNAKQI) lie on the Cytoplasmic side of the membrane.

The protein belongs to the major facilitator superfamily. Sugar transporter (TC 2.A.1.1) family.

The protein localises to the cell membrane. This Bacillus subtilis (strain 168) protein is Putative metabolite transport protein YyaJ (yyaJ).